The chain runs to 299 residues: MYNLHREKIFMSYNQNKQYLEDNPEIQEKIELYGLNLLNEVISDNEEEIRADYNEANFLHPFWMNYPPLDRGKMPKGDQIPWIEVGEKAVGSKLTRLVSQREDITVREIGLPTGPDERYLLTSPTIYSLTNGFTDSIMMFVDIKSVGPRDSDYDLVLSPNQVSGNGDWAQLEGGIQNNQQTIQGPRSSQIFLPTIPPLYILSDGTIAPVVHLFIKPIYAMRSLTKGDTGQSLYKIKLASVPNGLGLFCNPGYAFDSAYKFLFRPGKDDRTKSLLQKRVRVDLRVLDKIGPRVMTIDMDK.

Aspartate 116, aspartate 142, and isoleucine 143 together coordinate Mg(2+).

Homodimer. The cofactor is Mg(2+).

It catalyses the reaction Endonucleolytic cleavage of DNA to give specific double-stranded fragments with terminal 5'-phosphates.. Its function is as follows. A P subtype restriction enzyme that recognizes the double-stranded sequence 5'-GCCNNNNNGGC-3' and cleaves before N-8. In Bacillus subtilis, this protein is Type II restriction enzyme BglI (bglIR).